We begin with the raw amino-acid sequence, 160 residues long: Probable cyclic pyranopterin monophosphate synthase (160 aa).

The span at 1 to 12 (MSDDSELTHVTD) shows a compositional bias: basic and acidic residues. Positions 1 to 24 (MSDDSELTHVTDDGDAQMVDVGEK) are disordered. Substrate-binding positions include 78–80 (MCH) and 114–115 (ME). Asp129 is an active-site residue.

This sequence belongs to the MoaC family. Homohexamer; trimer of dimers.

The enzyme catalyses (8S)-3',8-cyclo-7,8-dihydroguanosine 5'-triphosphate = cyclic pyranopterin phosphate + diphosphate. It participates in cofactor biosynthesis; molybdopterin biosynthesis. Its function is as follows. Catalyzes the conversion of (8S)-3',8-cyclo-7,8-dihydroguanosine 5'-triphosphate to cyclic pyranopterin monophosphate (cPMP). The chain is Probable cyclic pyranopterin monophosphate synthase from Natronomonas pharaonis (strain ATCC 35678 / DSM 2160 / CIP 103997 / JCM 8858 / NBRC 14720 / NCIMB 2260 / Gabara) (Halobacterium pharaonis).